A 208-amino-acid polypeptide reads, in one-letter code: Redox-sensing transcriptional repressor Rex (208 aa).

Residues 15–54 constitute a DNA-binding region (H-T-H motif); sequence SYYMCLERLLDEGVEVVSSEELARRLDLKASQIRKDLSYF. 89 to 94 contacts NAD(+); that stretch reads GAGNIG.

Belongs to the transcriptional regulatory Rex family. Homodimer.

The protein resides in the cytoplasm. Its function is as follows. Modulates transcription in response to changes in cellular NADH/NAD(+) redox state. This chain is Redox-sensing transcriptional repressor Rex, found in Thermotoga petrophila (strain ATCC BAA-488 / DSM 13995 / JCM 10881 / RKU-1).